The following is a 330-amino-acid chain: FKBP12-interacting protein of 37 kDa (330 aa).

Met-1 carries the post-translational modification N-acetylmethionine. Acidic residues predominate over residues 1–12 (MEFSSQDDDFGG). The interval 1-43 (MEFSSQDDDFGGDDSAANATRASGNRRSFGDLEDDEDDIFGST) is disordered. Residues 17-26 (ANATRASGNR) are compositionally biased toward polar residues. Residues 56-308 (SLRGSLKNCK…KGLEIVSELV (253 aa)) are a coiled coil.

The protein belongs to the fl(2)d family. In terms of assembly, forms homodimers. Interacts with MTA/EMB1706. Interacts with FKBP12; interaction is inhibited by the immunosuppressive drug FK506. Interacts with VIR. Associates with MTA, MTB, VIR and HAKAI to form the m6A writer complex which is essential for adenosine methylation at specific mRNA sequences. Ubiquitously expressed with higher levels in primary and lateral roots, leaves, trichomes, and in pollen grains (at protein level).

The protein resides in the nucleus speckle. It localises to the nucleus. It is found in the nucleoplasm. Its function is as follows. Probable regulatory subunit of the N6-methyltransferase complex, a multiprotein complex that mediates N6-methyladenosine (m6A) methylation at the 5'-[AG]GAC-3' consensus sites of some mRNAs. Associates with MTA, MTB, VIR and HAKAI to form the m6A writer complex which is essential for adenosine methylation at specific mRNA sequences. N6-methyladenosine (m6A) plays a role in mRNA stability, processing, translation efficiency and editing. Essential protein required during endosperm development and embryogenesis. Involved in endoreduplication, especially in trichomes. May play a role in splicing events. The chain is FKBP12-interacting protein of 37 kDa from Arabidopsis thaliana (Mouse-ear cress).